Consider the following 417-residue polypeptide: Sulfate adenylyltransferase (417 aa).

Over residues 1-10 (MTSITANQKP) the composition is skewed to polar residues. The tract at residues 1–20 (MTSITANQKPSKLVPPHGSP) is disordered.

It belongs to the sulfate adenylyltransferase family.

It catalyses the reaction sulfate + ATP + H(+) = adenosine 5'-phosphosulfate + diphosphate. The protein operates within sulfur metabolism; hydrogen sulfide biosynthesis; sulfite from sulfate: step 1/3. The polypeptide is Sulfate adenylyltransferase (Psychrobacter arcticus (strain DSM 17307 / VKM B-2377 / 273-4)).